A 164-amino-acid polypeptide reads, in one-letter code: Thiol peroxidase (164 aa).

One can recognise a Thioredoxin domain in the interval Lys-18–Lys-164. Catalysis depends on Cys-60, which acts as the Cysteine sulfenic acid (-SOH) intermediate. An intrachain disulfide couples Cys-60 to Cys-94.

It belongs to the peroxiredoxin family. Tpx subfamily. Homodimer.

It carries out the reaction a hydroperoxide + [thioredoxin]-dithiol = an alcohol + [thioredoxin]-disulfide + H2O. Functionally, thiol-specific peroxidase that catalyzes the reduction of hydrogen peroxide and organic hydroperoxides to water and alcohols, respectively. Plays a role in cell protection against oxidative stress by detoxifying peroxides. The sequence is that of Thiol peroxidase from Oceanobacillus iheyensis (strain DSM 14371 / CIP 107618 / JCM 11309 / KCTC 3954 / HTE831).